Reading from the N-terminus, the 321-residue chain is D-alanine--D-alanine ligase (321 aa).

The region spanning 103–303 (KKILTPENIP…YVALCRMIVE (201 aa)) is the ATP-grasp domain. 129–186 (PLPRPYVLKPVNEGSSVGVAIIDESFNDGQPIRKDQIDPWKNFKTLLAEPFIKGRELT) contributes to the ATP binding site. Residues D254, E270, and N272 each coordinate Mg(2+).

It belongs to the D-alanine--D-alanine ligase family. It depends on Mg(2+) as a cofactor. Requires Mn(2+) as cofactor.

The protein localises to the cytoplasm. It carries out the reaction 2 D-alanine + ATP = D-alanyl-D-alanine + ADP + phosphate + H(+). It participates in cell wall biogenesis; peptidoglycan biosynthesis. Cell wall formation. This is D-alanine--D-alanine ligase from Zymomonas mobilis subsp. mobilis (strain ATCC 31821 / ZM4 / CP4).